A 162-amino-acid polypeptide reads, in one-letter code: UPF0114 protein VCM66_0196 (162 aa).

4 helical membrane-spanning segments follow: residues 15 to 35, 53 to 73, 109 to 126, and 136 to 156; these read IMAPIYLGLSLLLLALGIKFF, LILVALSLIDVSLVGGLIVMV, VSASIVAISSIHLLKVFM, and IKWYLLLHITFVVSAFAMGYL.

It belongs to the UPF0114 family.

It is found in the cell membrane. This is UPF0114 protein VCM66_0196 from Vibrio cholerae serotype O1 (strain M66-2).